A 288-amino-acid polypeptide reads, in one-letter code: Bifunctional protein FolD 2 (288 aa).

NADP(+)-binding positions include Gly166 to Ser168 and Ser191.

Belongs to the tetrahydrofolate dehydrogenase/cyclohydrolase family. As to quaternary structure, homodimer.

It catalyses the reaction (6R)-5,10-methylene-5,6,7,8-tetrahydrofolate + NADP(+) = (6R)-5,10-methenyltetrahydrofolate + NADPH. The enzyme catalyses (6R)-5,10-methenyltetrahydrofolate + H2O = (6R)-10-formyltetrahydrofolate + H(+). It functions in the pathway one-carbon metabolism; tetrahydrofolate interconversion. Its function is as follows. Catalyzes the oxidation of 5,10-methylenetetrahydrofolate to 5,10-methenyltetrahydrofolate and then the hydrolysis of 5,10-methenyltetrahydrofolate to 10-formyltetrahydrofolate. In Myxococcus xanthus (strain DK1622), this protein is Bifunctional protein FolD 2.